Here is a 70-residue protein sequence, read N- to C-terminus: Large ribosomal subunit protein bL31 (70 aa).

Zn(2+)-binding residues include Cys-16, Cys-18, Cys-37, and Cys-40.

The protein belongs to the bacterial ribosomal protein bL31 family. Type A subfamily. Part of the 50S ribosomal subunit. Zn(2+) is required as a cofactor.

Binds the 23S rRNA. The sequence is that of Large ribosomal subunit protein bL31 from Proteus mirabilis (strain HI4320).